The primary structure comprises 584 residues: Ubiquitin-like-specific protease 1D (584 aa).

Disordered regions lie at residues 28–64 (DKED…PKLL) and 99–323 (DLEE…QAAE). Residues 99-120 (DLEEEKQRRVLEGSKMEVDRSS) are compositionally biased toward basic and acidic residues. Over residues 121–132 (KVVSSTSSGSDV) the composition is skewed to low complexity. Basic and acidic residues-rich tracts occupy residues 142 to 165 (DTSR…KEVS) and 176 to 196 (PKTD…LGCE). Over residues 197-207 (RRKHKAGRKPV) the composition is skewed to basic residues. The span at 221 to 253 (GKAEHSAKQFDSGLKESKGNKKSKEPYGKKRPM) shows a compositional bias: basic and acidic residues. Residues 261 to 274 (IDDDDDDDDDDDND) are compositionally biased toward acidic residues. The span at 275–286 (TSGHETPREWSW) shows a compositional bias: basic and acidic residues. Active-site residues include His-438, Asp-461, and Cys-525.

This sequence belongs to the peptidase C48 family.

It is found in the nucleus speckle. Functionally, protease that catalyzes two essential functions in the SUMO pathway: processing of full-length SUMOs to their mature forms and deconjugation of SUMO from targeted proteins. Cleaves precursors of SUM1 and SUM2, but not of SUM3 or SUM5. Able to release SUM1 and SUM2 from conjugates, but unable to cleave SUM3. Protease activity mainly directed at deconjugating SUM1 and SUM2 from their target proteins. Regulates salt stress responses and flowering time. Redundant with ULP1C. This Arabidopsis thaliana (Mouse-ear cress) protein is Ubiquitin-like-specific protease 1D (ULP1D).